We begin with the raw amino-acid sequence, 75 residues long: Putative snRNP Sm-like protein (75 aa).

In terms of domain architecture, Sm spans 4–75; sequence RPLDVIHRSL…NVLAISPTEE (72 aa).

The protein belongs to the snRNP Sm proteins family.

The sequence is that of Putative snRNP Sm-like protein from Pyrococcus abyssi (strain GE5 / Orsay).